The chain runs to 391 residues: CBS domain-containing protein CBSX5 (391 aa).

CBS domains lie at 16-81 and 331-391; these read GKPP…DHDH and MARK…ENDM.

This Arabidopsis thaliana (Mouse-ear cress) protein is CBS domain-containing protein CBSX5 (CBSX5).